The chain runs to 377 residues: Anhydro-N-acetylmuramic acid kinase (377 aa).

14–21 is a binding site for ATP; that stretch reads GTSLDGVD.

This sequence belongs to the anhydro-N-acetylmuramic acid kinase family.

It carries out the reaction 1,6-anhydro-N-acetyl-beta-muramate + ATP + H2O = N-acetyl-D-muramate 6-phosphate + ADP + H(+). It participates in amino-sugar metabolism; 1,6-anhydro-N-acetylmuramate degradation. It functions in the pathway cell wall biogenesis; peptidoglycan recycling. In terms of biological role, catalyzes the specific phosphorylation of 1,6-anhydro-N-acetylmuramic acid (anhMurNAc) with the simultaneous cleavage of the 1,6-anhydro ring, generating MurNAc-6-P. Is required for the utilization of anhMurNAc either imported from the medium or derived from its own cell wall murein, and thus plays a role in cell wall recycling. This Pasteurella multocida (strain Pm70) protein is Anhydro-N-acetylmuramic acid kinase.